We begin with the raw amino-acid sequence, 141 residues long: MNCKILFRKELNDSECELSLLLVGDSDMKEINRLRRGKDKTTDVLSFPLEFDFSPLQKILPKNTSSDQKMFPPIALGEIVISIDTLQKQAKEIGHSEKDEFYRLLVHGFLHLLGYDHERGDKEEHIMKLKEDECLEILQGL.

His107, His111, and His117 together coordinate Zn(2+).

The protein belongs to the endoribonuclease YbeY family. Zn(2+) is required as a cofactor.

The protein resides in the cytoplasm. Its function is as follows. Single strand-specific metallo-endoribonuclease involved in late-stage 70S ribosome quality control and in maturation of the 3' terminus of the 16S rRNA. The sequence is that of Endoribonuclease YbeY from Leptospira interrogans serogroup Icterohaemorrhagiae serovar Lai (strain 56601).